The chain runs to 1563 residues: Pentafunctional AROM polypeptide (1563 aa).

The segment at 1 to 382 (MAEPISNPTR…YEPKASVVED (382 aa)) is 3-dehydroquinate synthase. Residues 48–50 (DTN), 82–85 (EYSK), 113–115 (GGV), and D118 each bind NAD(+). R129 contacts 7-phospho-2-dehydro-3-deoxy-D-arabino-heptonate. Residue 138-139 (TT) coordinates NAD(+). Residues D145 and K151 each contribute to the 7-phospho-2-dehydro-3-deoxy-D-arabino-heptonate site. K160 provides a ligand contact to NAD(+). Residue N161 participates in 7-phospho-2-dehydro-3-deoxy-D-arabino-heptonate binding. Residues 178-181 (FLNT) and N189 each bind NAD(+). E193 serves as a coordination point for Zn(2+). 7-phospho-2-dehydro-3-deoxy-D-arabino-heptonate is bound by residues 193–196 (EVIK) and K248. E258 (proton acceptor; for 3-dehydroquinate synthase activity) is an active-site residue. 7-phospho-2-dehydro-3-deoxy-D-arabino-heptonate-binding positions include 262–266 (RNLLN) and H269. H269 contacts Zn(2+). H273 functions as the Proton acceptor; for 3-dehydroquinate synthase activity in the catalytic mechanism. H285 and K354 together coordinate 7-phospho-2-dehydro-3-deoxy-D-arabino-heptonate. H285 provides a ligand contact to Zn(2+). The segment at 395-834 (VFAGVPKDLN…WDTMSNYFKV (440 aa)) is EPSP synthase. C816 acts as the For EPSP synthase activity in catalysis. The shikimate kinase stretch occupies residues 857 to 1051 (PKSIFIIGMR…KKKPHSFFVS (195 aa)). 864 to 871 (GMRGAGKS) contacts ATP. Positions 1052–1265 (LTVPNVSKAL…AAPGQLSAAE (214 aa)) are 3-dehydroquinase. The Proton acceptor; for 3-dehydroquinate dehydratase activity role is filled by H1168. The active-site Schiff-base intermediate with substrate; for 3-dehydroquinate dehydratase activity is the K1196. Residues 1278–1563 (PRSFHLFGNP…TDAQAAVMGN (286 aa)) form a shikimate dehydrogenase region.

This sequence in the N-terminal section; belongs to the sugar phosphate cyclases superfamily. Dehydroquinate synthase family. In the 2nd section; belongs to the EPSP synthase family. It in the 3rd section; belongs to the shikimate kinase family. The protein in the 4th section; belongs to the type-I 3-dehydroquinase family. This sequence in the C-terminal section; belongs to the shikimate dehydrogenase family. In terms of assembly, homodimer. Requires Zn(2+) as cofactor.

The protein localises to the cytoplasm. It carries out the reaction 7-phospho-2-dehydro-3-deoxy-D-arabino-heptonate = 3-dehydroquinate + phosphate. The catalysed reaction is 3-dehydroquinate = 3-dehydroshikimate + H2O. The enzyme catalyses shikimate + NADP(+) = 3-dehydroshikimate + NADPH + H(+). It catalyses the reaction shikimate + ATP = 3-phosphoshikimate + ADP + H(+). It carries out the reaction 3-phosphoshikimate + phosphoenolpyruvate = 5-O-(1-carboxyvinyl)-3-phosphoshikimate + phosphate. The protein operates within metabolic intermediate biosynthesis; chorismate biosynthesis; chorismate from D-erythrose 4-phosphate and phosphoenolpyruvate: step 2/7. It functions in the pathway metabolic intermediate biosynthesis; chorismate biosynthesis; chorismate from D-erythrose 4-phosphate and phosphoenolpyruvate: step 3/7. It participates in metabolic intermediate biosynthesis; chorismate biosynthesis; chorismate from D-erythrose 4-phosphate and phosphoenolpyruvate: step 4/7. Its pathway is metabolic intermediate biosynthesis; chorismate biosynthesis; chorismate from D-erythrose 4-phosphate and phosphoenolpyruvate: step 5/7. The protein operates within metabolic intermediate biosynthesis; chorismate biosynthesis; chorismate from D-erythrose 4-phosphate and phosphoenolpyruvate: step 6/7. Its function is as follows. The AROM polypeptide catalyzes 5 consecutive enzymatic reactions in prechorismate polyaromatic amino acid biosynthesis. The polypeptide is Pentafunctional AROM polypeptide (Neurospora crassa (strain ATCC 24698 / 74-OR23-1A / CBS 708.71 / DSM 1257 / FGSC 987)).